Reading from the N-terminus, the 989-residue chain is Voltage-gated delayed rectifier potassium channel KCNH1 (989 aa).

Over 1 to 220 (MTMAGGRRGL…LHYCVFKTTW (220 aa)) the chain is Cytoplasmic. The PAS domain maps to 14–94 (QNTFLENIVR…QTFENYEMNS (81 aa)). A PAC domain is found at 93–145 (NSFEILMYKKNRTPVWFFVKIAPIRNEQDKVVLFLCTFSDITAFKQPIEDDSC). The required for phosphatidylinositol bisphosphate binding stretch occupies residues 151–162 (FARLTRALTSSR). The helical transmembrane segment at 221-241 (DWIILILTFYTAILVPYNVSF) threads the bilayer. At 242–248 (KTRQNNV) the chain is on the extracellular side. Residues 249–269 (AWLVVDSIVDVIFLVDIVLNF) form a helical membrane-spanning segment. Residues 270-290 (HTTFVGPAGEVISDPKLIRMN) are Cytoplasmic-facing. The chain crosses the membrane as a helical span at residues 291-309 (YLKTWFVIDLLSCLPYDVI). The Extracellular portion of the chain corresponds to 310–345 (NAFENVDEVSAFMGDPGKIGFADQIPPPLEGRESQG). Residues 346 to 368 (ISSLFSSLKVVRLLRLGRVARKL) form a helical; Voltage-sensor membrane-spanning segment. The Cytoplasmic portion of the chain corresponds to 369–377 (DHYIEYGAA). The helical transmembrane segment at 378-399 (VLVLLVCVFGLAAHWMACIWYS) threads the bilayer. Residues 400–448 (IGDYEIFDEDTKTIRNNSWLYQLALDIGTPYQFNGSGSGKWEGGPSKNS) lie on the Extracellular side of the membrane. Asn415 and Asn433 each carry an N-linked (GlcNAc...) asparagine glycan. The pore-forming intramembrane region spans 449–470 (VYISSLYFTMTSLTSVGFGNIA). The Selectivity filter motif lies at 463–468 (SVGFGN). Over 471 to 477 (PSTDIEK) the chain is Extracellular. A helical transmembrane segment spans residues 478–498 (IFAVAIMMIGSLLYATIFGNV). The Cytoplasmic segment spans residues 499–989 (TTIFQQMYAN…ESDRDIFGAS (491 aa)). A calmodulin-binding region spans residues 673-770 (KRDALQKVLE…LDDLDVEKGN (98 aa)). Residues 699 to 701 (YNL) are interaction with cyclic nucleotide-binding pocket. Composition is skewed to basic and acidic residues over residues 857–879 (ESME…KTDS) and 887–901 (SDLR…RSPQ). Disordered stretches follow at residues 857–905 (ESME…DRSP) and 961–989 (RGSA…FGAS). A CAD (involved in subunit assembly) region spans residues 924-964 (ATVLEVKYELKEDIKALNAKMTSIEKQLSEILRILMSRGSA). Polar residues predominate over residues 962 to 979 (GSAQSPQETGEISRPQSP). Phosphoserine occurs at positions 974, 978, and 981. The segment covering 980–989 (ESDRDIFGAS) has biased composition (basic and acidic residues).

This sequence belongs to the potassium channel family. H (Eag) (TC 1.A.1.20) subfamily. Kv10.1/KCNH1 sub-subfamily. As to quaternary structure, homomultimer. The potassium channel is composed of a homo- or heterotetrameric complex of pore-forming alpha subunits that can associate with modulating beta subunits. Heteromultimer with KCNH5/EAG2. Interacts with ALG10B. Interacts with RABEP1. Interacts (via C-terminus) with CTTN. Interacts (via C-terminal cytoplasmic region) with Ca(2+)-bound calmodulin. Post-translationally, channel activity is regulated via tyrosine phosphorylation/dephosphorylation by SRC and PTPN6. As to expression, detected in brain (at protein level). Highly expressed in olfactory bulb. Detected in brain cortex, hippocampus, brain stem, striatum, thalamus, hypothalamus and spinal cord.

Its subcellular location is the cell membrane. It is found in the nucleus inner membrane. It localises to the cell projection. The protein localises to the dendrite. The protein resides in the axon. Its subcellular location is the presynaptic cell membrane. It is found in the perikaryon. It localises to the postsynaptic density membrane. The protein localises to the early endosome membrane. The catalysed reaction is K(+)(in) = K(+)(out). Channel activity is inhibited by interaction with Ca(2+)-bound calmodulin. Interaction of a single pore-forming alpha subunit with a calmodulin chain is sufficient to promote channel closure. Channel activity is not regulated by cyclic nucleotides. Channel activity is inhibited by binding intracellular phosphatidylinositol-3,5-bisphosphate and phosphatidylinositol-4,5-bisphosphate (PIP2), but is not inhibited by phosphatidylinositol 4-phosphate. Its function is as follows. Pore-forming (alpha) subunit of a voltage-gated delayed rectifier potassium channel that mediates outward-rectifying potassium currents which, on depolarization, reaches a steady-state level and do not inactivate. The activation kinetics depend on the prepulse potential and external divalent cation concentration. With negative prepulses, the current activation is delayed and slowed down several fold, whereas more positive prepulses speed up activation. The time course of activation is biphasic with a fast and a slowly activating current component. Activates at more positive membrane potentials and exhibit a steeper activation curve. Channel properties are modulated by subunit assembly. Mediates IK(NI) current in myoblasts. Involved in the regulation of cell proliferation and differentiation, in particular adipogenic and osteogenic differentiation in bone marrow-derived mesenchymal stem cells (MSCs). The chain is Voltage-gated delayed rectifier potassium channel KCNH1 from Mus musculus (Mouse).